The primary structure comprises 269 residues: 4-hydroxy-tetrahydrodipicolinate reductase (269 aa).

NAD(+) is bound by residues 8–13 (GAAGRM) and E34. An NADP(+)-binding site is contributed by R35. Residues 98–100 (GTT) and 122–125 (APNY) each bind NAD(+). Catalysis depends on H155, which acts as the Proton donor/acceptor. H156 provides a ligand contact to (S)-2,3,4,5-tetrahydrodipicolinate. K159 (proton donor) is an active-site residue. 165–166 (GT) lines the (S)-2,3,4,5-tetrahydrodipicolinate pocket.

This sequence belongs to the DapB family.

The protein localises to the cytoplasm. It catalyses the reaction (S)-2,3,4,5-tetrahydrodipicolinate + NAD(+) + H2O = (2S,4S)-4-hydroxy-2,3,4,5-tetrahydrodipicolinate + NADH + H(+). It carries out the reaction (S)-2,3,4,5-tetrahydrodipicolinate + NADP(+) + H2O = (2S,4S)-4-hydroxy-2,3,4,5-tetrahydrodipicolinate + NADPH + H(+). The protein operates within amino-acid biosynthesis; L-lysine biosynthesis via DAP pathway; (S)-tetrahydrodipicolinate from L-aspartate: step 4/4. Its function is as follows. Catalyzes the conversion of 4-hydroxy-tetrahydrodipicolinate (HTPA) to tetrahydrodipicolinate. The sequence is that of 4-hydroxy-tetrahydrodipicolinate reductase from Vibrio vulnificus (strain YJ016).